The following is a 230-amino-acid chain: Proteasome subunit alpha (230 aa).

Belongs to the peptidase T1A family. The 20S proteasome core is composed of 14 alpha and 14 beta subunits that assemble into four stacked heptameric rings, resulting in a barrel-shaped structure. The two inner rings, each composed of seven catalytic beta subunits, are sandwiched by two outer rings, each composed of seven alpha subunits. The catalytic chamber with the active sites is on the inside of the barrel. Has a gated structure, the ends of the cylinder being occluded by the N-termini of the alpha-subunits. Is capped by the proteasome-associated ATPase, ARC.

The protein localises to the cytoplasm. It functions in the pathway protein degradation; proteasomal Pup-dependent pathway. Its activity is regulated as follows. The formation of the proteasomal ATPase ARC-20S proteasome complex, likely via the docking of the C-termini of ARC into the intersubunit pockets in the alpha-rings, may trigger opening of the gate for substrate entry. Interconversion between the open-gate and close-gate conformations leads to a dynamic regulation of the 20S proteasome proteolysis activity. Component of the proteasome core, a large protease complex with broad specificity involved in protein degradation. This Thermomonospora curvata (strain ATCC 19995 / DSM 43183 / JCM 3096 / KCTC 9072 / NBRC 15933 / NCIMB 10081 / Henssen B9) protein is Proteasome subunit alpha.